Consider the following 102-residue polypeptide: Small ribosomal subunit protein uS10 (102 aa).

The protein belongs to the universal ribosomal protein uS10 family. As to quaternary structure, part of the 30S ribosomal subunit.

Involved in the binding of tRNA to the ribosomes. This is Small ribosomal subunit protein uS10 from Staphylococcus saprophyticus subsp. saprophyticus (strain ATCC 15305 / DSM 20229 / NCIMB 8711 / NCTC 7292 / S-41).